We begin with the raw amino-acid sequence, 1220 residues long: Polycomb protein Sfmbt (1220 aa).

An FCS-type zinc finger spans residues Pro-322–Arg-357. Residues Cys-331, Cys-334, Cys-351, and Cys-355 each contribute to the Zn(2+) site. Disordered stretches follow at residues Gly-371–Ser-399 and Asp-464–Ser-483. Residues Glu-473 to Leu-482 are compositionally biased toward polar residues. MBT repeat units lie at residues Tyr-536–Pro-647, Lys-655–Pro-753, Leu-761–Pro-871, and Phe-879–Pro-975. Disordered regions lie at residues Pro-976 to Lys-1024 and Asn-1050 to Gly-1092. The segment covering Lys-991–Lys-1000 has biased composition (basic residues). Acidic residues predominate over residues Gln-1052–Gly-1068. The segment covering Ser-1071–Gln-1082 has biased composition (polar residues). A compositionally biased stretch (low complexity) spans Ser-1083 to Gly-1092. One can recognise an SAM domain in the interval Trp-1140 to Lys-1203.

As to quaternary structure, interacts with pho as a component of the pho-repressive complex (PhoRC).

Its subcellular location is the nucleus. In terms of biological role, polycomb group (PcG) protein that binds to the Polycomb response elements (PREs) found in the regulatory regions of many genes. PcG proteins act by forming multiprotein complexes, which are required to maintain the transcriptionally repressive state of homeotic genes throughout development. PcG proteins are not required to initiate repression, but to maintain it during later stages of development. They probably act via the methylation of histones, rendering chromatin heritably changed in its expressibility. Necessary but not sufficient to recruit a functional PcG repressive complex that represses target genes, suggesting that the recruitment of the distinct PRC1 complex is also required to allow a subsequent repression. This chain is Polycomb protein Sfmbt, found in Drosophila melanogaster (Fruit fly).